The sequence spans 265 residues: Putative 2-amino-3,7-dideoxy-D-threo-hept-6-ulosonate synthase 2 (265 aa).

The active-site Proton acceptor is D27. 1-deoxy-D-threo-hexo-2,5-diulose 6-phosphate-binding positions include 27–31 and 147–149; these read DHGVS and YPR. Y147 acts as the Proton donor in catalysis. K177 (schiff-base intermediate with substrate) is an active-site residue. 1-deoxy-D-threo-hexo-2,5-diulose 6-phosphate-binding positions include 202–203 and 230–231; these read GG and GR.

This sequence belongs to the DeoC/FbaB aldolase family. ADHS subfamily. Homodecamer.

It carries out the reaction 1-deoxy-D-threo-hexo-2,5-diulose 6-phosphate + L-aspartate 4-semialdehyde = 2,3-dioxopropyl phosphate + 2-amino-2,3,7-trideoxy-D-lyxo-hept-6-ulosonate. Catalyzes a transaldol reaction between 6-deoxy-5-ketofructose 1-phosphate (DKFP) and L-aspartate semialdehyde (ASA) with an elimination of hydroxypyruvaldehyde phosphate to yield 2-amino-3,7-dideoxy-D-threo-hept-6-ulosonate (ADH). Plays a key role in an alternative pathway of the biosynthesis of 3-dehydroquinate (DHQ), which is involved in the canonical pathway for the biosynthesis of aromatic amino acids. The protein is Putative 2-amino-3,7-dideoxy-D-threo-hept-6-ulosonate synthase 2 of Archaeoglobus fulgidus (strain ATCC 49558 / DSM 4304 / JCM 9628 / NBRC 100126 / VC-16).